Here is a 332-residue protein sequence, read N- to C-terminus: L-lactate dehydrogenase A chain (332 aa).

NAD(+)-binding positions include 29–57 and R99; that span reads GAVG…IEDK. The substrate site is built by R106, N138, and R169. N138 contacts NAD(+). H193 (proton acceptor) is an active-site residue. Residue T248 participates in substrate binding.

The protein belongs to the LDH/MDH superfamily. LDH family. In terms of assembly, homotetramer.

Its subcellular location is the cytoplasm. It carries out the reaction (S)-lactate + NAD(+) = pyruvate + NADH + H(+). It participates in fermentation; pyruvate fermentation to lactate; (S)-lactate from pyruvate: step 1/1. Its function is as follows. Interconverts simultaneously and stereospecifically pyruvate and lactate with concomitant interconversion of NADH and NAD(+). This is L-lactate dehydrogenase A chain (LDHA) from Sceloporus woodi (Florida scrub lizard).